Here is a 288-residue protein sequence, read N- to C-terminus: ATP synthase gamma chain (288 aa).

Belongs to the ATPase gamma chain family. As to quaternary structure, F-type ATPases have 2 components, CF(1) - the catalytic core - and CF(0) - the membrane proton channel. CF(1) has five subunits: alpha(3), beta(3), gamma(1), delta(1), epsilon(1). CF(0) has three main subunits: a, b and c.

The protein resides in the cell membrane. In terms of biological role, produces ATP from ADP in the presence of a proton gradient across the membrane. The gamma chain is believed to be important in regulating ATPase activity and the flow of protons through the CF(0) complex. The chain is ATP synthase gamma chain from Macrococcus caseolyticus (strain JCSC5402) (Macrococcoides caseolyticum).